Consider the following 248-residue polypeptide: Ubiquinone/menaquinone biosynthesis C-methyltransferase UbiE (248 aa).

2 residues coordinate S-adenosyl-L-methionine: Ser68 and Asp92.

Belongs to the class I-like SAM-binding methyltransferase superfamily. MenG/UbiE family.

The catalysed reaction is a 2-demethylmenaquinol + S-adenosyl-L-methionine = a menaquinol + S-adenosyl-L-homocysteine + H(+). It catalyses the reaction a 2-methoxy-6-(all-trans-polyprenyl)benzene-1,4-diol + S-adenosyl-L-methionine = a 5-methoxy-2-methyl-3-(all-trans-polyprenyl)benzene-1,4-diol + S-adenosyl-L-homocysteine + H(+). The protein operates within quinol/quinone metabolism; menaquinone biosynthesis; menaquinol from 1,4-dihydroxy-2-naphthoate: step 2/2. Its pathway is cofactor biosynthesis; ubiquinone biosynthesis. Its function is as follows. Methyltransferase required for the conversion of demethylmenaquinol (DMKH2) to menaquinol (MKH2) and the conversion of 2-polyprenyl-6-methoxy-1,4-benzoquinol (DDMQH2) to 2-polyprenyl-3-methyl-6-methoxy-1,4-benzoquinol (DMQH2). The protein is Ubiquinone/menaquinone biosynthesis C-methyltransferase UbiE of Rickettsia peacockii (strain Rustic).